A 315-amino-acid polypeptide reads, in one-letter code: Methionyl-tRNA formyltransferase (315 aa).

(6S)-5,6,7,8-tetrahydrofolate is bound at residue 113–116 (SILP).

Belongs to the Fmt family.

The catalysed reaction is L-methionyl-tRNA(fMet) + (6R)-10-formyltetrahydrofolate = N-formyl-L-methionyl-tRNA(fMet) + (6S)-5,6,7,8-tetrahydrofolate + H(+). In terms of biological role, attaches a formyl group to the free amino group of methionyl-tRNA(fMet). The formyl group appears to play a dual role in the initiator identity of N-formylmethionyl-tRNA by promoting its recognition by IF2 and preventing the misappropriation of this tRNA by the elongation apparatus. The chain is Methionyl-tRNA formyltransferase from Vibrio vulnificus (strain CMCP6).